Here is a 202-residue protein sequence, read N- to C-terminus: FMN reductase (NADH) RutF 1 (202 aa).

The disordered stretch occupies residues Pro-168–Ala-202. The span at Pro-171–Ala-196 shows a compositional bias: low complexity.

This sequence belongs to the non-flavoprotein flavin reductase family. RutF subfamily.

The catalysed reaction is FMNH2 + NAD(+) = FMN + NADH + 2 H(+). Its function is as follows. Catalyzes the reduction of FMN to FMNH2 which is used to reduce pyrimidine by RutA via the Rut pathway. In Methylorubrum extorquens (strain PA1) (Methylobacterium extorquens), this protein is FMN reductase (NADH) RutF 1.